Reading from the N-terminus, the 212-residue chain is Adenylate kinase (212 aa).

10 to 15 (GAGKGT) is a binding site for ATP. Residues 30 to 59 (STGDMFRAAMANQTEMGRLAKSYIDKGELV) are NMP. Residues Thr31, Arg36, 57–59 (ELV), 86–89 (GYPR), and Gln93 contribute to the AMP site. Positions 127–159 (GRIINRKTGETFHKVFNPPVDYKEEDYYQREDD) are LID. Residues Arg128 and 137-138 (TF) each bind ATP. AMP is bound by residues Arg156 and Arg167. Gln195 contacts ATP.

The protein belongs to the adenylate kinase family. As to quaternary structure, monomer.

It is found in the cytoplasm. It carries out the reaction AMP + ATP = 2 ADP. It participates in purine metabolism; AMP biosynthesis via salvage pathway; AMP from ADP: step 1/1. Functionally, catalyzes the reversible transfer of the terminal phosphate group between ATP and AMP. Plays an important role in cellular energy homeostasis and in adenine nucleotide metabolism. The protein is Adenylate kinase of Streptococcus pyogenes serotype M12 (strain MGAS2096).